The following is a 163-amino-acid chain: Shikimate kinase (163 aa).

An ATP-binding site is contributed by 10–15; the sequence is GVGKTT. Mg(2+) is bound at residue threonine 14. The substrate site is built by aspartate 28, arginine 52, and glycine 75. Arginine 116 is an ATP binding site. Arginine 134 lines the substrate pocket.

The protein belongs to the shikimate kinase family. In terms of assembly, monomer. It depends on Mg(2+) as a cofactor.

The protein localises to the cytoplasm. The enzyme catalyses shikimate + ATP = 3-phosphoshikimate + ADP + H(+). It functions in the pathway metabolic intermediate biosynthesis; chorismate biosynthesis; chorismate from D-erythrose 4-phosphate and phosphoenolpyruvate: step 5/7. Catalyzes the specific phosphorylation of the 3-hydroxyl group of shikimic acid using ATP as a cosubstrate. The protein is Shikimate kinase of Streptococcus suis (strain 98HAH33).